Consider the following 337-residue polypeptide: tRNA N6-adenosine threonylcarbamoyltransferase (337 aa).

Histidine 111 and histidine 115 together coordinate Fe cation. Residues 134 to 138 (LVSGG), aspartate 167, glycine 180, and asparagine 272 each bind substrate. Residue aspartate 300 participates in Fe cation binding.

This sequence belongs to the KAE1 / TsaD family. It depends on Fe(2+) as a cofactor.

It localises to the cytoplasm. The enzyme catalyses L-threonylcarbamoyladenylate + adenosine(37) in tRNA = N(6)-L-threonylcarbamoyladenosine(37) in tRNA + AMP + H(+). Functionally, required for the formation of a threonylcarbamoyl group on adenosine at position 37 (t(6)A37) in tRNAs that read codons beginning with adenine. Is involved in the transfer of the threonylcarbamoyl moiety of threonylcarbamoyl-AMP (TC-AMP) to the N6 group of A37, together with TsaE and TsaB. TsaD likely plays a direct catalytic role in this reaction. In Escherichia coli O139:H28 (strain E24377A / ETEC), this protein is tRNA N6-adenosine threonylcarbamoyltransferase.